We begin with the raw amino-acid sequence, 3390 residues long: MNNQRKKTGKPSINMLKRVRNRVSTGSQLAKRFSKGLLNGQGPMKLVMAFIAFLRFLAIPPTAGVLARWGTFKKSGAIKVLKGFKKEISNMLSIINQRKKTSLCLMMILPAALAFHLTSRDGEPRMIVGKNERGKSLLFKTASGINMCTLIAMDLGEMCDDTVTYKCPHITEVEPEDIDCWCNLTSTWVTYGTCNQAGEHRRDKRSVALAPHVGMGLDTRTQTWMSAEGAWRQVEKVETWALRHPGFTILALFLAHYIGTSLTQKVVIFILLMLVTPSMTMRCVGVGNRDFVEGLSGATWVDVVLEHGGCVTTMAKNKPTLDIELQKTEATQLATLRKLCIEGKITNITTDSRCPTQGEAVLPEEQDQNYVCKHTYVDRGWGNGCGLFGKGSLVTCAKFQCLEPIEGKVVQYENLKYTVIITVHTGDQHQVGNETQGVTAEITPQASTTEAILPEYGTLGLECSPRTGLDFNEMILLTMKNKAWMVHRQWFFDLPLPWASGATTETPTWNRKELLVTFKNAHAKKQEVVVLGSQEGAMHTALTGATEIQNSGGTSIFAGHLKCRLKMDKLELKGMSYAMCTNTFVLKKEVSETQHGTILIKVEYKGEDAPCKIPFSTEDGQGKAHNGRLITANPVVTKKEEPVNIEAEPPFGESNIVIGIGDNALKINWYKKGSSIGKMFEATERGARRMAILGDTAWDFGSVGGVLNSLGKMVHQIFGSAYTALFSGVSWVMKIGIGVLLTWIGLNSKNTSMSFSCIAIGIITLYLGAVVQADMGCVINWKGKELKCGSGIFVTNEVHTWTEQYKFQADSPKRLATAIAGAWENGVCGIRSTTRMENLLWKQIANELNYILWENNIKLTVVVGDTLGVLEQGKRTLTPQPMELKYSWKTWGKAKIVTAETQNSSFIIDGPNTPECPSASRAWNVWEVEDYGFGVFTTNIWLKLREVYTQLCDHRLMSAAVKDERAVHADMGYWIESQKNGSWKLEKASLIEVKTCTWPKSHTLWTNGVLESDMIIPKSLAGPISQHNYRPGYHTQTAGPWHLGKLELDFNYCEGTTVVITESCGTRGPSLRTTTVSGKLIHEWCCRSCTLPPLRYMGEDGCWYGMEIRPISEKEENMVKSLVSAGSGKVDNFTMGVLCLAILFEEVLRGKFGKKHMIAGVFFTFVLLLSGQITWRDMAHTLIMIGSNASDRMGMGVTYLALIATFKIQPFLALGFFLRKLTSRENLLLGVGLAMATTLQLPEDIEQMANGVALGLMALKLITQFETYQLWTALVSLTCSNTIFTLTVAWRTATLILAGVSLLPVCQSSSMRKTDWLPMTVAAMGVPPLPLFIFSLKDTLKRRSWPLNEGVMAVGLVSILASSLLRNDVPMAGPLVAGGLLIACYVITGTSADLTVEKAPDVTWEEEAEQTGVSHNLMITVDDDGTMRIKDDETENILTVLLKTALLIVSGIFPYSIPATLLVWHTWQKQTQRSGVLWDVPSPPETQKAELEEGVYRIKQQGIFGKTQVGVGVQKEGVFHTMWHVTRGAVLTHNGKRLEPNWASVKKDLISYGGGWRLSAQWQKGEEVQVIAVEPGKNPKNFQTTPGTFQTTTGEIGAIALDFKPGTSGSPIINREGKVVGLYGNGVVTKNGGYVSGIAQTNAEPDGPTPELEEEMFKKRNLTIMDLHPGSGKTRKYLPAIVREAIKRRLRTLILAPTRVVAAEMEEALKGLPIRYQTTATKSEHTGREIVDLMCHATFTMRLLSPVRVPNYNLIIMDEAHFTDPASIAARGYISTRVGMGEAAAIFMTATPPGTADAFPQSNAPIQDEERDIPERSWNSGNEWITDFAGKTVWFVPSIKAGNDIANCLRKNGKKVIQLSRKTFDTEYQKTKLNDWDFVVTTDISEMGANFKADRVIDPRRCLKPVILTDGPERVILAGPMPVTAASAAQRRGRVGRNPQKENDQYIFTGQPLNNDEDHAHWTEAKMLLDNINTPEGIIPALFEPEREKSAAIDGEYRLKGESRKTFVELMRRGDLPVWLAHKVASEGIKYTDRKWCFDGQRNNQILEENMDVEIWTKEGEKKKLRPRWLDARTYSDPLALKEFKDFAAGRKSIALDLVTEIGRVPSHLAHRTRNALDNLVMLHTSEDGGRAYRHAVEELPETMETLLLLGLMILLTGGAMLFLISGKGIGKTSIGLICVIASSGMLWMAEVPLQWIASAIVLEFFMMVLLIPEPEKQRTPQDNQLAYVVIGILTLAATIAANEMGLLETTKRDLGMSKEPGVVSPTSYLDVDLHPASAWTLYAVATTVITPMLRHTIENSTANVSLAAIANQAVVLMGLDKGWPISKMDLGVPLLALGCYSQVNPLTLTAAVLLLITHYAIIGPGLQAKATREAQKRTAAGIMKNPTVDGIMTIDLDSVIFDSKFEKQLGQVMLLVLCAVQLLLMRTSWALCEALTLATGPITTLWEGSPGKFWNTTIAVSMANIFRGSYLAGAGLAFSIMKSVGTGKRGTGSQGETLGEKWKKKLNQLSRKEFDLYKKSGITEVDRTEAKEGLKRGETTHHAVSRGSAKLQWFVERNMVVPEGRVIDLGCGRGGWSYYCAGLKKVTEVRGYTKGGPGHEEPVPMSTYGWNIVKLMSGKDVFYLPPEKCDTLLCDIGESSPSPTVEESRTIRVLKMVEPWLKNNQFCIKVLNPYMPTVIEHLERLQRKHGGMLVRNPLSRNSTHEMYWISNGTGNIVSSVNMVSRLLLNRFTMTHRRPTIEKDVDLGAGTRHVNAEPETPNMDVIGERIKRIKEEHNSTWHYDDENPYKTWAYHGSYEVKATGSASSMINGVVKLLTKPWDVVPMVTQMAMTDTTPFGQQRVFKEKVDTRTPRPMPGTRKAMEITAEWLWRTLGRNKRPRLCTREEFTKKVRTNAAMGAVFTEENQWDSAKAAVEDEEFWKLVDRERELHKLGKCGSCVYNMMGKREKKLGEFGKAKGSRAIWYMWLGARYLEFEALGFLNEDHWFSRENSYSGVEGEGLHKLGYILRDISKIPGGAMYADDTAGWDTRITEDDLHNEEKIIQQMDPEHRQLANAIFKLTYQNKVVKVQRPTPTGTVMDIISRKDQRGSGQLGTYGLNTFTNMEAQLVRQMEGEGVLTKADLENPHLLEKKITQWLETKGVERLKRMAISGDDCVVKPIDDRFANALLALNDMGKVRKDIPQWQPSKGWHDWQQVPFCSHHFHELIMKDGRKLVVPCRPQDELIGRARISQGAGWSLRETACLGKAYAQMWSLMYFHRRDLRLASNAICSAVPVHWVPTSRTTWSIHAHHQWMTTEDMLTVWNRVWIEENPWMEDKTPVTTWENVPYLGKREDQWCGSLIGLTSRATWAQNIPTAIQQVRSLIGNEEFLDYMPSMKRFRKEEESEGAIW.

The tract at residues 1–15 is interaction with host EXOC1; it reads MNNQRKKTGKPSINM. Residues 1-100 are Cytoplasmic-facing; that stretch reads MNNQRKKTGK…MLSIINQRKK (100 aa). A hydrophobic; homodimerization of capsid protein C region spans residues 37–72; that stretch reads LLNGQGPMKLVMAFIAFLRFLAIPPTAGVLARWGTF. Residues 101 to 114 constitute a propeptide, ER anchor for the capsid protein C, removed in mature form by serine protease NS3; sequence TSLCLMMILPAALA. Residues 101 to 120 form a helical membrane-spanning segment; it reads TSLCLMMILPAALAFHLTSR. The Extracellular portion of the chain corresponds to 121–243; that stretch reads DGEPRMIVGK…VEKVETWALR (123 aa). N-linked (GlcNAc...) asparagine; by host glycosylation is present at asparagine 183. Residues 244–264 form a helical membrane-spanning segment; it reads HPGFTILALFLAHYIGTSLTQ. Position 265 (lysine 265) is a topological domain, cytoplasmic. The chain crosses the membrane as a helical span at residues 266–280; the sequence is VVIFILLMLVTPSMT. Topologically, residues 281–723 are extracellular; the sequence is MRCVGVGNRD…VHQIFGSAYT (443 aa). 4 disulfides stabilise this stretch: cysteine 283–cysteine 310, cysteine 340–cysteine 401, cysteine 354–cysteine 385, and cysteine 372–cysteine 396. An N-linked (GlcNAc...) asparagine; by host glycan is attached at asparagine 347. The segment at 378-391 is fusion peptide; the sequence is DRGWGNGCGLFGKG. Asparagine 433 carries an N-linked (GlcNAc...) asparagine; by host glycan. Intrachain disulfides connect cysteine 463-cysteine 563 and cysteine 580-cysteine 611. A helical transmembrane segment spans residues 724–744; it reads ALFSGVSWVMKIGIGVLLTWI. At 745–750 the chain is on the cytoplasmic side; the sequence is GLNSKN. Residues 751–771 form a helical membrane-spanning segment; that stretch reads TSMSFSCIAIGIITLYLGAVV. The Extracellular segment spans residues 772–1193; that stretch reads QADMGCVINW…MIGSNASDRM (422 aa). 6 disulfide bridges follow: cysteine 777–cysteine 788, cysteine 828–cysteine 916, cysteine 952–cysteine 996, cysteine 1053–cysteine 1102, cysteine 1064–cysteine 1086, and cysteine 1085–cysteine 1089. Residues asparagine 903 and asparagine 980 are each glycosylated (N-linked (GlcNAc...) asparagine; by host). 2 N-linked (GlcNAc...) asparagine; by host glycosylation sites follow: asparagine 1132 and asparagine 1188. A helical membrane pass occupies residues 1194-1218; sequence GMGVTYLALIATFKIQPFLALGFFL. Residues 1219 to 1224 are Cytoplasmic-facing; it reads RKLTSR. A helical membrane pass occupies residues 1225 to 1243; it reads ENLLLGVGLAMATTLQLPE. The Lumenal portion of the chain corresponds to 1244–1267; sequence DIEQMANGVALGLMALKLITQFET. Residues 1268–1288 traverse the membrane as a helical segment; sequence YQLWTALVSLTCSNTIFTLTV. Residue alanine 1289 is a topological domain, cytoplasmic. A helical transmembrane segment spans residues 1290–1308; the sequence is WRTATLILAGVSLLPVCQS. The Lumenal portion of the chain corresponds to 1309-1315; the sequence is SSMRKTD. A helical transmembrane segment spans residues 1316–1336; it reads WLPMTVAAMGVPPLPLFIFSL. Over 1337–1344 the chain is Cytoplasmic; that stretch reads KDTLKRRS. The chain crosses the membrane as a helical span at residues 1345–1365; the sequence is WPLNEGVMAVGLVSILASSLL. The Lumenal segment spans residues 1366-1368; the sequence is RND. A helical membrane pass occupies residues 1369–1389; it reads VPMAGPLVAGGLLIACYVITG. The Cytoplasmic portion of the chain corresponds to 1390-1443; that stretch reads TSADLTVEKAPDVTWEEEAEQTGVSHNLMITVDDDGTMRIKDDETENILTVLLK. Residues 1396-1435 are interacts with and activates NS3 protease; the sequence is VEKAPDVTWEEEAEQTGVSHNLMITVDDDGTMRIKDDETE. Residues 1444 to 1464 constitute an intramembrane region (helical); it reads TALLIVSGIFPYSIPATLLVW. Residues 1465-2146 are Cytoplasmic-facing; that stretch reads HTWQKQTQRS…VEELPETMET (682 aa). The Peptidase S7 domain occupies 1474–1651; the sequence is SGVLWDVPSP…NAEPDGPTPE (178 aa). Active-site charge relay system; for serine protease NS3 activity residues include histidine 1524, aspartate 1548, and serine 1608. The 157-residue stretch at 1654-1810 folds into the Helicase ATP-binding domain; that stretch reads EEMFKKRNLT…QSNAPIQDEE (157 aa). The segment at 1658 to 1661 is important for RNA-binding; the sequence is KKRN. 1667 to 1674 is an ATP binding site; the sequence is LHPGSGKT. A DEAH box motif is present at residues 1758-1761; the sequence is DEAH. The Helicase C-terminal domain occupies 1820–1986; the sequence is SGNEWITDFA…GIIPALFEPE (167 aa). N6-acetyllysine; by host is present on lysine 1862. A helical transmembrane segment spans residues 2147-2167; sequence LLLLGLMILLTGGAMLFLISG. The Lumenal segment spans residues 2168–2169; sequence KG. The segment at residues 2170 to 2190 is an intramembrane region (helical); sequence IGKTSIGLICVIASSGMLWMA. Residue glutamate 2191 is a topological domain, lumenal. Residues 2192 to 2212 form a helical membrane-spanning segment; that stretch reads VPLQWIASAIVLEFFMMVLLI. At 2213–2227 the chain is on the cytoplasmic side; the sequence is PEPEKQRTPQDNQLA. Residues 2228–2248 traverse the membrane as a helical segment; sequence YVVIGILTLAATIAANEMGLL. Residues 2249–2273 lie on the Lumenal side of the membrane; sequence ETTKRDLGMSKEPGVVSPTSYLDVD. Positions 2274-2294 form an intramembrane region, helical; it reads LHPASAWTLYAVATTVITPML. Residues 2295–2305 lie on the Lumenal side of the membrane; the sequence is RHTIENSTANV. N-linked (GlcNAc...) asparagine; by host glycans are attached at residues asparagine 2300 and asparagine 2304. Residues 2306–2326 constitute an intramembrane region (helical); sequence SLAAIANQAVVLMGLDKGWPI. Over 2327–2346 the chain is Lumenal; sequence SKMDLGVPLLALGCYSQVNP. Residues 2347 to 2367 form a helical membrane-spanning segment; sequence LTLTAAVLLLITHYAIIGPGL. Residues 2368-2412 lie on the Cytoplasmic side of the membrane; sequence QAKATREAQKRTAAGIMKNPTVDGIMTIDLDSVIFDSKFEKQLGQ. A helical transmembrane segment spans residues 2413–2433; it reads VMLLVLCAVQLLLMRTSWALC. Over 2434–2458 the chain is Lumenal; that stretch reads EALTLATGPITTLWEGSPGKFWNTT. A glycan (N-linked (GlcNAc...) asparagine; by host) is linked at asparagine 2456. The chain crosses the membrane as a helical span at residues 2459–2479; it reads IAVSMANIFRGSYLAGAGLAF. Residues 2480–3390 are Cytoplasmic-facing; that stretch reads SIMKSVGTGK…KEEESEGAIW (911 aa). The mRNA cap 0-1 NS5-type MT domain occupies 2492-2753; that stretch reads TGSQGETLGE…DVDLGAGTRH (262 aa). Residue serine 2546 participates in S-adenosyl-L-methionine binding. Position 2546 is a phosphoserine (serine 2546). The active-site For 2'-O-MTase activity is lysine 2551. Positions 2567 to 2570 match the SUMO-interacting motif motif; sequence VIDL. S-adenosyl-L-methionine is bound by residues glycine 2576, tryptophan 2577, threonine 2594, lysine 2595, aspartate 2621, and valine 2622. Aspartate 2636 acts as the For 2'-O-MTase activity in catalysis. An S-adenosyl-L-methionine-binding site is contributed by isoleucine 2637. Residues lysine 2670 and glutamate 2706 each act as for 2'-O-MTase activity in the active site. Residue tyrosine 2708 coordinates S-adenosyl-L-methionine. The Zn(2+) site is built by glutamate 2927, histidine 2931, cysteine 2936, and cysteine 2939. Residues 3018-3168 enclose the RdRp catalytic domain; that stretch reads AMYADDTAGW…PIDDRFANAL (151 aa). Zn(2+)-binding residues include histidine 3202, cysteine 3218, and cysteine 3337.

The protein in the N-terminal section; belongs to the class I-like SAM-binding methyltransferase superfamily. mRNA cap 0-1 NS5-type methyltransferase family. Homodimer. Interacts (via N-terminus) with host EXOC1 (via C-terminus); this interaction results in EXOC1 degradation through the proteasome degradation pathway. As to quaternary structure, forms heterodimers with envelope protein E in the endoplasmic reticulum and Golgi. In terms of assembly, homodimer; in the endoplasmic reticulum and Golgi. Interacts with protein prM. Interacts with non-structural protein 1. Homodimer; Homohexamer when secreted. Interacts with envelope protein E. As to quaternary structure, interacts (via N-terminus) with serine protease NS3. In terms of assembly, forms a heterodimer with serine protease NS3. May form homooligomers. Forms a heterodimer with NS2B. Interacts with NS4B. Interacts with unphosphorylated RNA-directed RNA polymerase NS5; this interaction stimulates RNA-directed RNA polymerase NS5 guanylyltransferase activity. Interacts with host SHFL. As to quaternary structure, interacts with host MAVS; this interaction inhibits the synthesis of IFN-beta. Interacts with host SHFL. Interacts with host AUP1; the interaction occurs in the presence of Dengue virus NS4B and induces lipophagy which facilitates production of virus progeny particles. In terms of assembly, interacts with serine protease NS3. Homodimer. Interacts with host STAT2; this interaction inhibits the phosphorylation of the latter, and, when all viral proteins are present (polyprotein), targets STAT2 for degradation. Interacts with serine protease NS3. Specific enzymatic cleavages in vivo yield mature proteins. Cleavages in the lumen of endoplasmic reticulum are performed by host signal peptidase, whereas cleavages in the cytoplasmic side are performed by serine protease NS3. Signal cleavage at the 2K-4B site requires a prior NS3 protease-mediated cleavage at the 4A-2K site. Post-translationally, cleaved in post-Golgi vesicles by a host furin, releasing the mature small envelope protein M, and peptide pr. This cleavage is incomplete as up to 30% of viral particles still carry uncleaved prM. In terms of processing, N-glycosylated. N-glycosylated. The excreted form is glycosylated and this is required for efficient secretion of the protein from infected cells. Post-translationally, acetylated by host KAT5. Acetylation modulates NS3 RNA-binding and unwinding activities and plays an important positive role for viral replication. In terms of processing, sumoylation of RNA-directed RNA polymerase NS5 increases NS5 protein stability allowing proper viral RNA replication. Phosphorylated on serines residues. This phosphorylation may trigger NS5 nuclear localization.

Its subcellular location is the virion. The protein resides in the host nucleus. It is found in the host cytoplasm. It localises to the host perinuclear region. The protein localises to the secreted. Its subcellular location is the virion membrane. The protein resides in the host endoplasmic reticulum membrane. It is found in the host mitochondrion. It carries out the reaction Selective hydrolysis of -Xaa-Xaa-|-Yaa- bonds in which each of the Xaa can be either Arg or Lys and Yaa can be either Ser or Ala.. The enzyme catalyses RNA(n) + a ribonucleoside 5'-triphosphate = RNA(n+1) + diphosphate. The catalysed reaction is a ribonucleoside 5'-triphosphate + H2O = a ribonucleoside 5'-diphosphate + phosphate + H(+). It catalyses the reaction ATP + H2O = ADP + phosphate + H(+). It carries out the reaction a 5'-end (5'-triphosphoguanosine)-ribonucleoside in mRNA + S-adenosyl-L-methionine = a 5'-end (N(7)-methyl 5'-triphosphoguanosine)-ribonucleoside in mRNA + S-adenosyl-L-homocysteine. The enzyme catalyses a 5'-end (N(7)-methyl 5'-triphosphoguanosine)-ribonucleoside in mRNA + S-adenosyl-L-methionine = a 5'-end (N(7)-methyl 5'-triphosphoguanosine)-(2'-O-methyl-ribonucleoside) in mRNA + S-adenosyl-L-homocysteine + H(+). Plays a role in virus budding by binding to the cell membrane and gathering the viral RNA into a nucleocapsid that forms the core of a mature virus particle. During virus entry, may induce genome penetration into the host cytoplasm after hemifusion induced by the surface proteins. Can migrate to the cell nucleus where it modulates host functions. Overcomes the anti-viral effects of host EXOC1 by sequestering and degrading the latter through the proteasome degradation pathway. In terms of biological role, inhibits RNA silencing by interfering with host Dicer. Functionally, prevents premature fusion activity of envelope proteins in trans-Golgi by binding to envelope protein E at pH6.0. After virion release in extracellular space, gets dissociated from E dimers. Its function is as follows. Acts as a chaperone for envelope protein E during intracellular virion assembly by masking and inactivating envelope protein E fusion peptide. prM is the only viral peptide matured by host furin in the trans-Golgi network probably to avoid catastrophic activation of the viral fusion activity in acidic Golgi compartment prior to virion release. prM-E cleavage is inefficient, and many virions are only partially matured. These uncleaved prM would play a role in immune evasion. May play a role in virus budding. Exerts cytotoxic effects by activating a mitochondrial apoptotic pathway through M ectodomain. May display a viroporin activity. In terms of biological role, binds to host cell surface receptor and mediates fusion between viral and cellular membranes. Envelope protein is synthesized in the endoplasmic reticulum in the form of heterodimer with protein prM. They play a role in virion budding in the ER, and the newly formed immature particle is covered with 60 spikes composed of heterodimer between precursor prM and envelope protein E. The virion is transported to the Golgi apparatus where the low pH causes dissociation of PrM-E heterodimers and formation of E homodimers. prM-E cleavage is inefficient, and many virions are only partially matured. These uncleaved prM would play a role in immune evasion. Functionally, involved in immune evasion, pathogenesis and viral replication. Once cleaved off the polyprotein, is targeted to three destinations: the viral replication cycle, the plasma membrane and the extracellular compartment. Essential for viral replication. Required for formation of the replication complex and recruitment of other non-structural proteins to the ER-derived membrane structures. Excreted as a hexameric lipoparticle that plays a role against host immune response. Antagonizing the complement function. Binds to the host macrophages and dendritic cells. Inhibits signal transduction originating from Toll-like receptor 3 (TLR3). Its function is as follows. Disrupts the host endothelial glycocalyx layer of host pulmonary microvascular endothelial cells, inducing degradation of sialic acid and shedding of heparan sulfate proteoglycans. NS1 induces expression of sialidases, heparanase, and activates cathepsin L, which activates heparanase via enzymatic cleavage. These effects are probably linked to the endothelial hyperpermeability observed in severe dengue disease. Component of the viral RNA replication complex that functions in virion assembly and antagonizes the host immune response. In terms of biological role, required cofactor for the serine protease function of NS3. May have membrane-destabilizing activity and form viroporins. Functionally, displays three enzymatic activities: serine protease, NTPase and RNA helicase. NS3 serine protease, in association with NS2B, performs its autocleavage and cleaves the polyprotein at dibasic sites in the cytoplasm: C-prM, NS2A-NS2B, NS2B-NS3, NS3-NS4A, NS4A-2K and NS4B-NS5. NS3 RNA helicase binds RNA and unwinds dsRNA in the 3' to 5' direction. Its function is as follows. Regulates the ATPase activity of the NS3 helicase activity. NS4A allows NS3 helicase to conserve energy during unwinding. Plays a role in the inhibition of the host innate immune response. Interacts with host MAVS and thereby prevents the interaction between RIGI and MAVS. In turn, IFN-beta production is impaired. Interacts with host AUP1 which mediates induction of lipophagy in host cells and facilitates production of virus progeny particles. Functions as a signal peptide for NS4B and is required for the interferon antagonism activity of the latter. In terms of biological role, induces the formation of ER-derived membrane vesicles where the viral replication takes place. Inhibits interferon (IFN)-induced host STAT1 phosphorylation and nuclear translocation, thereby preventing the establishment of cellular antiviral state by blocking the IFN-alpha/beta pathway. Functionally, replicates the viral (+) and (-) RNA genome, and performs the capping of genomes in the cytoplasm. NS5 methylates viral RNA cap at guanine N-7 and ribose 2'-O positions. Besides its role in RNA genome replication, also prevents the establishment of cellular antiviral state by blocking the interferon-alpha/beta (IFN-alpha/beta) signaling pathway. Inhibits host TYK2 and STAT2 phosphorylation, thereby preventing activation of JAK-STAT signaling pathway. The polypeptide is Genome polyprotein (pol) (Dengue virus type 3 (strain Sri Lanka/1266/2000) (DENV-3)).